The sequence spans 288 residues: Protein sprouty homolog 3 (288 aa).

Positions 154 to 260 (KCVPCTAARP…GYDSLRRPGC (107 aa)) constitute an SPR domain.

It belongs to the sprouty family. As to quaternary structure, interacts with TESK1. Interacts with USP11. Interacts with CAV1 (via C-terminus). As to expression, widely expressed; particularly in the fetal tissues. Expressed in the brain with expression the highest in Purkinje cells in the cerebellum (at protein level). Expressed in the myocardium of the heart.

Its subcellular location is the cytoplasm. Its function is as follows. Inhibits neurite branching, arbor length and neurite complexity. Inhibits EGF-mediated p42/44 ERK signaling. Negatively regulates the MAPK cascade, resulting in a reduction of extracellular matrix protein accumulation. May function as an antagonist of fibroblast growth factor (FGF) pathways and may negatively modulate respiratory organogenesis. This chain is Protein sprouty homolog 3, found in Homo sapiens (Human).